A 245-amino-acid polypeptide reads, in one-letter code: 1-(5-phosphoribosyl)-5-[(5-phosphoribosylamino)methylideneamino] imidazole-4-carboxamide isomerase (245 aa).

Residue aspartate 15 is the Proton acceptor of the active site. Aspartate 135 (proton donor) is an active-site residue.

The protein belongs to the HisA/HisF family.

Its subcellular location is the cytoplasm. It carries out the reaction 1-(5-phospho-beta-D-ribosyl)-5-[(5-phospho-beta-D-ribosylamino)methylideneamino]imidazole-4-carboxamide = 5-[(5-phospho-1-deoxy-D-ribulos-1-ylimino)methylamino]-1-(5-phospho-beta-D-ribosyl)imidazole-4-carboxamide. The protein operates within amino-acid biosynthesis; L-histidine biosynthesis; L-histidine from 5-phospho-alpha-D-ribose 1-diphosphate: step 4/9. The protein is 1-(5-phosphoribosyl)-5-[(5-phosphoribosylamino)methylideneamino] imidazole-4-carboxamide isomerase of Haloquadratum walsbyi (strain DSM 16790 / HBSQ001).